Reading from the N-terminus, the 399-residue chain is Transcription termination factor 1, mitochondrial (399 aa).

Residues 1–57 constitute a mitochondrion transit peptide; it reads MQSLSLGQTSISKGLNYLTIMAPGNLWHMRNNFLFGSRCWMTRFSAENIFKSVSFRL. Interaction with DNA regions lie at residues 169–170, 247–251, 324–331, 355–358, and 384–391; these read RS, QSTKR, AEKKFNDK, SIST, and SKKRYEAK.

Belongs to the mTERF family. As to quaternary structure, monomer. Post-translationally, phosphoprotein with mostly four phosphate groups. While the DNA-binding activity is unaffected by the phosphorylation state, only the phosphorylated form of the protein is active for termination activity. Functioning seems to be regulated by phosphorylation.

Its subcellular location is the mitochondrion. Its function is as follows. Transcription termination factor. Binds to a 28 bp region within the tRNA(Leu(uur)) gene at a position immediately adjacent to and downstream of the 16S rRNA gene; this region comprises a tridecamer sequence critical for directing accurate termination. Binds DNA along the major grove and promotes DNA bending and partial unwinding. Promotes base flipping. Transcription termination activity appears to be polarized with highest specificity for transcripts initiated on the light strand. This chain is Transcription termination factor 1, mitochondrial (MTERF1), found in Homo sapiens (Human).